Consider the following 815-residue polypeptide: SNF1 protein kinase subunit beta-1 (815 aa).

The span at 1 to 11 (MGNSPSTQDPS) shows a compositional bias: polar residues. Disordered regions lie at residues 1–88 (MGNS…TIDK) and 117–146 (SDDH…TVKR). Gly2 is lipidated: N-myristoyl glycine. Residues 12-31 (HSTKKEHGHHFHDAFNKDRQ) show a composition bias toward basic and acidic residues. The span at 32-42 (GSITSQLFNNR) shows a compositional bias: polar residues. Ser33 carries the phosphoserine modification. Basic and acidic residues-rich tracts occupy residues 72 to 88 (PSTD…TIDK) and 117 to 129 (SDDH…EEQV). Ser181, Ser198, Ser200, Ser206, Ser209, and Ser220 each carry phosphoserine. 2 disordered regions span residues 311–335 (HANN…NDDF) and 362–389 (KHHN…FASL). Residues 313-326 (NNNGNIENNTRNKG) show a composition bias toward low complexity. The residue at position 331 (Ser331) is a Phosphoserine. Over residues 363 to 376 (HHNKTKKAQNKKIR) the composition is skewed to basic residues. Low complexity predominate over residues 377 to 389 (SVSNSRRSSFASL). Positions 473–716 (VSTDIASALK…LQQGGNIDAE (244 aa)) are kinase-interacting sequence (KIS); required for interaction with SNF1. Phosphoserine is present on residues Ser494 and Ser497. Residues 581–616 (EPTLDEELPKRPELKRFPSSSRKSSYYSAKGVERPS) are disordered. The segment covering 587–596 (ELPKRPELKR) has biased composition (basic and acidic residues). Low complexity predominate over residues 599 to 608 (SSSRKSSYYS). Ser643 bears the Phosphoserine mark. Positions 724 to 804 (SRYPVPDLPI…FITQVVYAPC (81 aa)) are association with SNF1 kinase complex (ASC) domain; required for interaction with SNF4.

It belongs to the 5'-AMP-activated protein kinase beta subunit family. As to quaternary structure, component of the SNF1 kinase complex, a heterotrimeric complex composed of the catalytic alpha subunit SNF1, one of the three related beta subunits SIP1, SIP2 or GAL83, and the regulatory gamma subunit SNF4. The beta subunit serves as a bridge between the catalytic and the regulatory subunit. Interacts (via KIS domain) with SNF1. Interacts (via ASC domain) with SNF4. Post-translationally, phosphorylated by SNF1 in vitro.

The protein resides in the cytoplasm. It localises to the vacuole membrane. Beta subunit of the SNF1 kinase complex, which is required for transcriptional, metabolic, and developmental adaptations in response to glucose limitation. Has a structural role, mediating heterotrimer formation, and a regulatory role, defining carbon source-regulated subcellular location and substrate specificity of the SNF1 kinase complex. Promotes the PKA-regulated relocalization of the SNF1 kinase complex to the vacuolar membrane in response to various types of carbon stress. In Saccharomyces cerevisiae (strain ATCC 204508 / S288c) (Baker's yeast), this protein is SNF1 protein kinase subunit beta-1 (SIP1).